A 314-amino-acid chain; its full sequence is Aspartate carbamoyltransferase catalytic subunit (314 aa).

Residues Arg-55 and Thr-56 each contribute to the carbamoyl phosphate site. Lys-83 contacts L-aspartate. Residues Arg-105, His-139, and Gln-142 each coordinate carbamoyl phosphate. 2 residues coordinate L-aspartate: Arg-172 and Arg-226. Residues Gly-267 and Pro-268 each contribute to the carbamoyl phosphate site.

Belongs to the aspartate/ornithine carbamoyltransferase superfamily. ATCase family. As to quaternary structure, heterododecamer (2C3:3R2) of six catalytic PyrB chains organized as two trimers (C3), and six regulatory PyrI chains organized as three dimers (R2).

The enzyme catalyses carbamoyl phosphate + L-aspartate = N-carbamoyl-L-aspartate + phosphate + H(+). The protein operates within pyrimidine metabolism; UMP biosynthesis via de novo pathway; (S)-dihydroorotate from bicarbonate: step 2/3. Catalyzes the condensation of carbamoyl phosphate and aspartate to form carbamoyl aspartate and inorganic phosphate, the committed step in the de novo pyrimidine nucleotide biosynthesis pathway. In Rhodococcus erythropolis (strain PR4 / NBRC 100887), this protein is Aspartate carbamoyltransferase catalytic subunit.